Reading from the N-terminus, the 695-residue chain is Phosphate acetyltransferase (695 aa).

The phosphate acetyltransferase stretch occupies residues 374–695; it reads FRYQLIQRAQ…LTAIQASVAR (322 aa).

The protein in the N-terminal section; belongs to the CobB/CobQ family. In the C-terminal section; belongs to the phosphate acetyltransferase and butyryltransferase family. In terms of assembly, homohexamer.

It is found in the cytoplasm. It carries out the reaction acetyl-CoA + phosphate = acetyl phosphate + CoA. Its pathway is metabolic intermediate biosynthesis; acetyl-CoA biosynthesis; acetyl-CoA from acetate: step 2/2. Functionally, involved in acetate metabolism. The polypeptide is Phosphate acetyltransferase (pta) (Pseudomonas putida (strain ATCC 47054 / DSM 6125 / CFBP 8728 / NCIMB 11950 / KT2440)).